The following is a 627-amino-acid chain: UvrABC system protein C (627 aa).

In terms of domain architecture, GIY-YIG spans 26-105; it reads PEPGVYFMRD…IKQHQPYFNV (80 aa). Residues 215 to 250 form the UVR domain; the sequence is QELIDILSEQMEKAAEALNFEVAARIRDQIAGLKSL.

The protein belongs to the UvrC family. As to quaternary structure, interacts with UvrB in an incision complex.

It is found in the cytoplasm. Functionally, the UvrABC repair system catalyzes the recognition and processing of DNA lesions. UvrC both incises the 5' and 3' sides of the lesion. The N-terminal half is responsible for the 3' incision and the C-terminal half is responsible for the 5' incision. This Trichormus variabilis (strain ATCC 29413 / PCC 7937) (Anabaena variabilis) protein is UvrABC system protein C.